The following is a 91-amino-acid chain: Small ribosomal subunit protein bS16 (91 aa).

The protein belongs to the bacterial ribosomal protein bS16 family.

This Lacticaseibacillus casei (strain BL23) (Lactobacillus casei) protein is Small ribosomal subunit protein bS16.